The primary structure comprises 293 residues: ATP synthase subunit a (293 aa).

The next 6 helical transmembrane spans lie at 40–60, 98–118, 151–171, 188–208, 225–245, and 264–284; these read DSLFWSGLMGLIVIFCLWLAA, FVAPLALTVFLWIILMNALDL, DLNVPMGMSLGVLLLMFYYGI, FHAHGLAALVLAPFNLLLNLI, MFAGELIFMLIALLGGAWTGF, and AIFHILIVLLQAFIFMMLTLV.

The protein belongs to the ATPase A chain family. In terms of assembly, F-type ATPases have 2 components, CF(1) - the catalytic core - and CF(0) - the membrane proton channel. CF(1) has five subunits: alpha(3), beta(3), gamma(1), delta(1), epsilon(1). CF(0) has three main subunits: a(1), b(2) and c(9-12). The alpha and beta chains form an alternating ring which encloses part of the gamma chain. CF(1) is attached to CF(0) by a central stalk formed by the gamma and epsilon chains, while a peripheral stalk is formed by the delta and b chains.

Its subcellular location is the cell inner membrane. Functionally, key component of the proton channel; it plays a direct role in the translocation of protons across the membrane. The sequence is that of ATP synthase subunit a from Bordetella avium (strain 197N).